A 190-amino-acid chain; its full sequence is Small ribosomal subunit protein uS5 (190 aa).

Residues 22-85 (FVDKLVHINR…DSAKRNLTRV (64 aa)) form the S5 DRBM domain.

This sequence belongs to the universal ribosomal protein uS5 family. In terms of assembly, part of the 30S ribosomal subunit. Contacts proteins S4 and S8.

With S4 and S12 plays an important role in translational accuracy. Its function is as follows. Located at the back of the 30S subunit body where it stabilizes the conformation of the head with respect to the body. This is Small ribosomal subunit protein uS5 from Bradyrhizobium sp. (strain BTAi1 / ATCC BAA-1182).